The chain runs to 477 residues: Protoporphyrinogen oxidase (477 aa).

FAD contacts are provided by residues 9–14 (GGGISG), Trp-42, 57–60 (GPRG), Val-257, Ala-449, and 454–456 (VAV).

Belongs to the protoporphyrinogen/coproporphyrinogen oxidase family. Protoporphyrinogen oxidase subfamily. In terms of assembly, monomer. Homodimer. It depends on FAD as a cofactor.

It is found in the mitochondrion inner membrane. The enzyme catalyses protoporphyrinogen IX + 3 O2 = protoporphyrin IX + 3 H2O2. The protein operates within porphyrin-containing compound metabolism; protoporphyrin-IX biosynthesis; protoporphyrin-IX from protoporphyrinogen-IX: step 1/1. Inhibited by acifluorfen. Catalyzes the 6-electron oxidation of protoporphyrinogen-IX to form protoporphyrin-IX. This chain is Protoporphyrinogen oxidase (Ppox), found in Mus musculus (Mouse).